Here is a 181-residue protein sequence, read N- to C-terminus: ECF RNA polymerase sigma factor RpoE (181 aa).

A sigma-70 factor domain-2 region spans residues 29–96 (LFQHFAPKVK…RRIDGLRKDR (68 aa)). Positions 53 to 56 (ECAQ) match the Interaction with polymerase core subunit RpoC motif. Positions 129–178 (AIARLPEAQRALIERAFFGDLTHRELAAETGLPLGTIKSRIRLALDRLRQ) are sigma-70 factor domain-4. Residues 151-170 (HRELAAETGLPLGTIKSRIR) constitute a DNA-binding region (H-T-H motif).

The protein belongs to the sigma-70 factor family. ECF subfamily. As to quaternary structure, interacts transiently with the RNA polymerase catalytic core formed by RpoA, RpoB, RpoC and RpoZ (2 alpha, 1 beta, 1 beta' and 1 omega subunit) to form the RNA polymerase holoenzyme that can initiate transcription. Forms a 1:1 complex (via sigma-70 factor domain 4) with anti-sigma factor ChrR; this inhibits the interaction of RpoE with the RNA polymerase catalytic core.

Sigma factors are initiation factors that promote the attachment of RNA polymerase to specific initiation sites and are then released. Extracytoplasmic function (ECF) sigma factors are held in an inactive form by a cognate anti-sigma factor until released. Sigma-E controls a transcriptional response to singlet oxygen, a by-product of photosynthesis; its continuous activity requires constant exposure to singlet oxygen. The regulon has about 180 genes that protect against or repair damage induced by singlet oxygen, including itself and rpoH2, a heat shock-responsive sigma factor. This is ECF RNA polymerase sigma factor RpoE (rpoE) from Cereibacter sphaeroides (strain ATCC 17023 / DSM 158 / JCM 6121 / CCUG 31486 / LMG 2827 / NBRC 12203 / NCIMB 8253 / ATH 2.4.1.) (Rhodobacter sphaeroides).